The sequence spans 128 residues: U24-ctenitoxin-Pn1a (128 aa).

2 consecutive Thyroglobulin type-1 domains span residues lysine 4–cysteine 67 and lysine 72–cysteine 127. 4 disulfide bridges follow: cysteine 7–cysteine 27, cysteine 38–cysteine 45, cysteine 47–cysteine 67, and cysteine 107–cysteine 127.

Expressed by the venom gland.

It is found in the secreted. Its function is as follows. Cysteine proteinase inhibitor. This Phoneutria nigriventer (Brazilian armed spider) protein is U24-ctenitoxin-Pn1a.